The chain runs to 634 residues: MAVSAPPVISATSSSAGVPGGLFRAEPLYSSPGEPPRLTPNMINSFMANNHNGSVLGGGIGGGSGGSSNTNTNECRMVDMHGVKVASFLMDGQELICLPQVFDLFLKHLVGGLHTVYTKLKRLDISPVVCTVEQVRILRGLGAIQPGVNRCKLITRKDFETLFTDCTNARRKRQMTRKQAVNSSRPGRPPKRSLGVLQDNARLLPHAVPGLLSPGLITPTGITAAAMAEAMKLQKMKLMAMNTLQGNGSQNGTESEPDDLNSTTGGSESSWDKDKIQSPLAASGPQHGIAHAALAGQPGLGGAPTLNPLQQNHLLSNRLDLPFMMMPHPLLPVSLPPASVAMAMNQMNHLNTIANMAAAAQIHSPLSRAGASVIKERIPESPSPAPSLEESHRPGSQTSSHPSSSVSSSPSQMDHHSERMVMMPNNREELIVDQDNGQSIKKFQRDNKEEVPAQIPVMKSPLDKIQLAPGQALHPGFPGPFIFADSLSSVETLLTNIQGLLKVALDNARIQEKQIQQEKKELRIELFREREIRENLERQLAVELQSRSTMQKRLKKEKKAKRKLQEALEFESKRREQVEQALKQATSGDSGLRMLKDSGIPDIEIENSGTPHDSAAMQGGNYYCLAMAQQLCSA.

Positions 76–162 (RMVDMHGVKV…LITRKDFETL (87 aa)) are DACHbox-N. 3 disordered regions span residues 171–194 (RKRQ…KRSL), 244–286 (LQGN…SGPQ), and 378–416 (IPES…MDHH). A compositionally biased stretch (polar residues) spans 244–269 (LQGNGSQNGTESEPDDLNSTTGGSES). Residues 396-412 (SQTSSHPSSSVSSSPSQ) show a composition bias toward low complexity. The DACHbox-C stretch occupies residues 488-568 (SSVETLLTNI…KAKRKLQEAL (81 aa)). Residues 494–588 (LTNIQGLLKV…EQALKQATSG (95 aa)) adopt a coiled-coil conformation.

It belongs to the DACH/dachshund family. Interacts with SIX6. Interacts with EYA2. In terms of tissue distribution, expressed in embryo, and at lower levels in the newborn.

It is found in the nucleus. Its function is as follows. Transcription factor that is involved in regulation of organogenesis. Seems to be a regulator for SIX1 and SIX6. Seems to act as a corepressor of SIX6 in regulating proliferation by directly repressing cyclin-dependent kinase inhibitors, including the p27Kip1 promoter. Is recruited with SIX6 to the p27Kip1 promoter in embryonal retina. SIX6 corepression also seems to involve NCOR1, TBL1, HDAC1 and HDAC3. May be involved together with PAX3, SIX1, and EYA2 in regulation of myogenesis. In the developing somite, expression of DACH2 and PAX3 is regulated by the overlying ectoderm, and DACH2 and PAX3 positively regulate each other's expression. Probably binds to DNA via its DACHbox-N domain. The chain is Dachshund homolog 2 (Dach2) from Mus musculus (Mouse).